Here is a 908-residue protein sequence, read N- to C-terminus: UPF0182 protein NT01CX_0852 (908 aa).

Transmembrane regions (helical) follow at residues 8–28, 47–67, 96–116, 157–177, 209–229, 253–273, and 280–300; these read IGLFFCIALTVIFLKKIVNVI, FTSVISLFILVFLICFVAIKT, IINALTLIISLFIALNFSLGY, LLSLLILLAVITVIVYMFLNI, LAILGALLLLCISVGYLIKAW, FYIAISIVSIISSIIVAFSIL, and IISCVILIAVLVISERVVSGA.

Belongs to the UPF0182 family.

The protein resides in the cell membrane. In Clostridium novyi (strain NT), this protein is UPF0182 protein NT01CX_0852.